Reading from the N-terminus, the 181-residue chain is MRLVLLGPPGAGKGTQAAILSEKLRIPHISTGDLFRANIGEGTPLGKEAKSYIDAGKLVPTDVTARMVKARLQKDDAEVGFLLDGFPRTVEQAEILKEMLKGFGVELNGVINYEVAEDVVVERMLARGRADDNEDTIRTRLQVYRDETAPLIRHYGDDIITIKAEGSIEDINARTLGALGK.

Glycine 10–threonine 15 lines the ATP pocket. The segment at serine 30–valine 59 is NMP. AMP is bound by residues threonine 31, arginine 36, lysine 57–valine 59, glycine 85–arginine 88, and glutamine 92. Positions alanine 126 to aspartate 132 are LID. ATP is bound at residue arginine 127. AMP-binding residues include arginine 129 and arginine 140. Glycine 166 is a binding site for ATP.

The protein belongs to the adenylate kinase family. Monomer.

The protein localises to the cytoplasm. The catalysed reaction is AMP + ATP = 2 ADP. Its pathway is purine metabolism; AMP biosynthesis via salvage pathway; AMP from ADP: step 1/1. Functionally, catalyzes the reversible transfer of the terminal phosphate group between ATP and AMP. Plays an important role in cellular energy homeostasis and in adenine nucleotide metabolism. In Corynebacterium diphtheriae (strain ATCC 700971 / NCTC 13129 / Biotype gravis), this protein is Adenylate kinase.